A 428-amino-acid polypeptide reads, in one-letter code: GTPase Obg (428 aa).

In terms of domain architecture, Obg spans 1–158; that stretch reads MFVDQTKIDV…RTLRLELKVL (158 aa). Positions 159-328 constitute an OBG-type G domain; that stretch reads ADVGLVGFPS…LMGKTADLVE (170 aa). GTP contacts are provided by residues 165-172, 190-194, 212-215, 282-285, and 309-311; these read GFPSVGKS, FTTLT, DLPG, TQMD, and SSV. Residues Ser172 and Thr192 each coordinate Mg(2+). The OCT domain occupies 350–428; the sequence is YKKPEDDGFK…IADFTFEFVD (79 aa).

The protein belongs to the TRAFAC class OBG-HflX-like GTPase superfamily. OBG GTPase family. Monomer. It depends on Mg(2+) as a cofactor.

The protein localises to the cytoplasm. An essential GTPase which binds GTP, GDP and possibly (p)ppGpp with moderate affinity, with high nucleotide exchange rates and a fairly low GTP hydrolysis rate. Plays a role in control of the cell cycle, stress response, ribosome biogenesis and in those bacteria that undergo differentiation, in morphogenesis control. This is GTPase Obg from Lactobacillus gasseri (strain ATCC 33323 / DSM 20243 / BCRC 14619 / CIP 102991 / JCM 1131 / KCTC 3163 / NCIMB 11718 / NCTC 13722 / AM63).